A 268-amino-acid chain; its full sequence is Proenkephalin-A (268 aa).

A signal peptide spans 1-24 (MARFLRLCTWLLVLGSCLLATVQA). Disulfide bonds link Cys-26/Cys-48, Cys-30/Cys-52, and Cys-33/Cys-65. A disordered region spans residues 162-185 (GTGDNRAREGRHQESTDNDDNMSK). The span at 166–176 (NRAREGRHQES) shows a compositional bias: basic and acidic residues. Propeptides lie at residues 197-208 (SPQVEDEAKELQ) and 218-228 (VGRPEWWMDYQ). Ser-252 carries the phosphoserine modification.

The protein belongs to the opioid neuropeptide precursor family. Proenkephalin-A is cleaved by CTSL to generate Met-enkephalin. In terms of processing, processed and degraded by ACE. Post-translationally, probably cleaved by ACE. Processed by ACE to generate Met-enkephalin in the nucleus accumbens of the brain. In terms of processing, the N-terminal domain contains 6 conserved cysteines thought to be involved in disulfide bonding and/or processing.

It localises to the cytoplasmic vesicle. The protein resides in the secretory vesicle. It is found in the chromaffin granule lumen. Its subcellular location is the secreted. Its function is as follows. Neuropeptide that competes with and mimic the effects of opiate drugs. They play a role in a number of physiologic functions, including pain perception and responses to stress. Met-enkephalin-Arg-Phe neuropeptide acts as a strong ligand of Mu-type opioid receptor OPRM1. Met-enkephalin-Arg-Phe-binding to OPRM1 in the nucleus accumbens of the brain increases activation of OPRM1, leading to long-term synaptic depression of glutamate release. In terms of biological role, increases glutamate release in the striatum and decreases GABA concentration in the striatum. Functionally, increases glutamate release in the striatum. The sequence is that of Proenkephalin-A (PENK) from Mesocricetus auratus (Golden hamster).